The sequence spans 413 residues: Putative glutamate synthase [NADPH] small chain (413 aa).

Positions 33, 37, 43, and 47 each coordinate [4Fe-4S] cluster.

In terms of assembly, aggregate of 4 catalytic active heterodimers, consisting of a large and a small subunit. [4Fe-4S] cluster is required as a cofactor.

The catalysed reaction is 2 L-glutamate + NADP(+) = L-glutamine + 2-oxoglutarate + NADPH + H(+). Its pathway is amino-acid biosynthesis; L-glutamate biosynthesis via GLT pathway; L-glutamate from 2-oxoglutarate and L-glutamine (NADP(+) route): step 1/1. It functions in the pathway energy metabolism; nitrogen metabolism. The chain is Putative glutamate synthase [NADPH] small chain (gltD) from Cereibacter sphaeroides (Rhodobacter sphaeroides).